The sequence spans 648 residues: Phosphatidylinositol polyphosphate 5-phosphatase type IV (648 aa).

Residues 1–64 (MPSKSACLRH…PLSMPAKPSN (64 aa)) are disordered. The span at 36–54 (TSASLPAADSQSSQTNSMP) shows a compositional bias: polar residues. 2 consecutive repeat copies span residues 59-62 (PAKP) and 76-79 (PQPP). Residues 59–243 (PAKPSNQNLQ…AHSNLGPSRP (185 aa)) form a 4 X 4 AA repeats of P-X-X-P region. The disordered stretch occupies residues 99 to 158 (RFRGSQEDLTVQNGASPCRGSLQDSVAQSPAYSRPLPCLSTSLQEIPKPRRATGSEGGSP). S103 bears the Phosphoserine mark. Residues 120–129 (LQDSVAQSPA) show a composition bias toward polar residues. Repeat unit 3 spans residues 147–150 (PRRA). T197 is modified (phosphothreonine). Residues 240 to 243 (PSRP) form repeat 4. Phosphoserine occurs at positions 245 and 260. C645 carries the cysteine methyl ester modification. C645 carries S-farnesyl cysteine lipidation. A propeptide spans 646 to 648 (TVS) (removed in mature form).

This sequence belongs to the inositol 1,4,5-trisphosphate 5-phosphatase type IV family. As to quaternary structure, interacts (when prenylated) with PDE6D; this is important for normal location in cilia.

It is found in the cytoplasm. The protein resides in the cytoskeleton. Its subcellular location is the cilium axoneme. It localises to the golgi apparatus. The protein localises to the golgi stack membrane. It is found in the cell membrane. The protein resides in the cell projection. Its subcellular location is the ruffle. It localises to the nucleus. It carries out the reaction a 1,2-diacyl-sn-glycero-3-phospho-(1D-myo-inositol-4,5-bisphosphate) + H2O = a 1,2-diacyl-sn-glycero-3-phospho-(1D-myo-inositol 4-phosphate) + phosphate. The enzyme catalyses a 1,2-diacyl-sn-glycero-3-phospho-(1D-myo-inositol-3,4,5-trisphosphate) + H2O = a 1,2-diacyl-sn-glycero-3-phospho-(1D-myo-inositol-3,4-bisphosphate) + phosphate. It catalyses the reaction a 1,2-diacyl-sn-glycero-3-phospho-(1D-myo-inositol-3,5-bisphosphate) + H2O = a 1,2-diacyl-sn-glycero-3-phospho-(1D-myo-inositol-3-phosphate) + phosphate. Functionally, phosphatidylinositol (PtdIns) phosphatase that specifically hydrolyzes the 5-phosphate of phosphatidylinositol-3,4,5-trisphosphate (PtdIns(3,4,5)P3), phosphatidylinositol 4,5-bisphosphate PtdIns (4,5)P2 and phosphatidylinositol 3,5-bisphosphate (PtdIns(3,5)P2). Specific for lipid substrates, inactive towards water soluble inositol phosphates. Plays an essential role in the primary cilium by controlling ciliary growth and phosphoinositide 3-kinase (PI3K) signaling and stability. In Rattus norvegicus (Rat), this protein is Phosphatidylinositol polyphosphate 5-phosphatase type IV (Inpp5e).